The sequence spans 1169 residues: MTISDKIRVYELSRDLKLENKDILDAAQKLSISVKSHSSSISLEDAKKIKNLINKNSSKKILSVSKSAIKAKNENPKNNDNKNNKNFSNPSHPEKLSKEGLNKKPLLIKPTNKVVNSLVSSNIKNPNPPTIVSNLKSQALSKNQNKTNTSVITTPNLKDKKNPSALQDKKPLKNSSGSPAKTTARPPIQLIEKPKNLANSNRNINANKINNSVNQKAQSLNRADNNKLSRADNNNFPKKNLNSPNVKSTPELVGAPIRREDPKINTNRPNSNSRQPSSNTQISANRPGGQNRQGVPNREGGPYRQGSPNRPGTPYRQGAPNRPGGQNRQGVPNREGGGPYRQGSPNRPGTPNRPGTPYRQGAPNRPGGQNRQGVPNREGGGPYRQGSPNRPGTPYRQGASGIRKPVAPNELMQLQKTNASNKEKPNISNVNKQKIEGANQKTKAPNSRLNTSPSPTAKKPARSFASNTKKPGRTDWDDSAKLEALRNKNPQKQRQKVHIIGENDDSLTSETSGYSGEKVSILSASLARPKKEKSEEIKSQKPSKQFKKKKKETTRQRQKRRAMELRAAKDAKQVRPEMIIIPEDNLTVQELADKLSLESSEIIKSLFFKGITATVTQSLDLATIETVAEEFGVPVLQDDVQEAAKKTVDMIETDDIESLIKRPPVITVMGHVDHGKTSLLDSIRESRVASGEAGGITQHIGAYQVEFEHESKKKKLTFLDTPGHEAFTAMRARGTKVTDVAVLVVAADDGCRPQTLEAISHARAAKVPIVVAINKIDKEGASPDRVKQELSEKDLIAEDWGGDVVMVPVSAIKKQNIDKLLEMILLVSEVEDLQANPERLAKGTVIEAHLDKAKGPVATLLVQNGTLKAGDVLAAGSVLGKIRAMVDEHGNRIKEAGPSCPVEALGFSEVPTAGDEFEVYRDEKSARAIVGDRATDARATKLAQQMASRRVSLSSLSTQANDGELKELNLILKADVQGSVEAILGSLEQLPKNEVQVRVLLSAPGEITETDIDLAAASGSVIIGFNTSLASGAKRAADANDVDIREYEVIYKLLEDIQSAMEGLLEPDLVEESLGQAEVRATFAVGKGAIAGCYIQSGKLQRNCSLRVLRSDKVIFEGNLDSLKRSKDDVKEVNTGFECGVGCDKFSTWSEGDIISAFKFVTKKRTLNK.

Disordered stretches follow at residues 69 to 108 and 139 to 568; these read IKAK…PLLI and ALSK…LRAA. Basic and acidic residues-rich tracts occupy residues 71–83 and 92–102; these read AKNE…DNKN and HPEKLSKEGLN. The segment covering 139–156 has biased composition (polar residues); sequence ALSKNQNKTNTSVITTPN. Residues 157 to 171 show a composition bias toward basic and acidic residues; it reads LKDKKNPSALQDKKP. Positions 196 to 214 are enriched in low complexity; the sequence is NLANSNRNINANKINNSVN. The segment covering 231-248 has biased composition (polar residues); sequence ADNNNFPKKNLNSPNVKS. The segment covering 265–281 has biased composition (low complexity); it reads NTNRPNSNSRQPSSNTQ. Polar residues-rich tracts occupy residues 282–294, 412–432, and 439–455; these read ISAN…NRQG, MQLQ…NVNK, and NQKT…SPSP. The segment covering 472 to 486 has biased composition (basic and acidic residues); it reads GRTDWDDSAKLEALR. The segment covering 544–560 has biased composition (basic residues); it reads KQFKKKKKETTRQRQKR. The 178-residue stretch at 661-838 folds into the tr-type G domain; it reads KRPPVITVMG…EVEDLQANPE (178 aa). Residues 670–677 form a G1 region; that stretch reads GHVDHGKT. Residue 670–677 coordinates GTP; sequence GHVDHGKT. The tract at residues 695 to 699 is G2; that stretch reads GITQH. A G3 region spans residues 720-723; it reads DTPG. Residues 720–724 and 774–777 each bind GTP; these read DTPGH and NKID. A G4 region spans residues 774-777; sequence NKID. The tract at residues 810–812 is G5; that stretch reads SAI.

This sequence belongs to the TRAFAC class translation factor GTPase superfamily. Classic translation factor GTPase family. IF-2 subfamily.

It is found in the cytoplasm. Its function is as follows. One of the essential components for the initiation of protein synthesis. Protects formylmethionyl-tRNA from spontaneous hydrolysis and promotes its binding to the 30S ribosomal subunits. Also involved in the hydrolysis of GTP during the formation of the 70S ribosomal complex. The chain is Translation initiation factor IF-2 from Prochlorococcus marinus subsp. pastoris (strain CCMP1986 / NIES-2087 / MED4).